Here is a 356-residue protein sequence, read N- to C-terminus: 3-isopropylmalate dehydrogenase (356 aa).

4 residues coordinate substrate: R95, R105, R133, and D223. Mg(2+) is bound by residues D223, D247, and D251. 281–293 (GSAPDIAGQNKAN) is an NAD(+) binding site.

Belongs to the isocitrate and isopropylmalate dehydrogenases family. LeuB type 1 subfamily. Homodimer. Mg(2+) serves as cofactor. Requires Mn(2+) as cofactor.

The protein resides in the cytoplasm. It carries out the reaction (2R,3S)-3-isopropylmalate + NAD(+) = 4-methyl-2-oxopentanoate + CO2 + NADH. Its pathway is amino-acid biosynthesis; L-leucine biosynthesis; L-leucine from 3-methyl-2-oxobutanoate: step 3/4. Functionally, catalyzes the oxidation of 3-carboxy-2-hydroxy-4-methylpentanoate (3-isopropylmalate) to 3-carboxy-4-methyl-2-oxopentanoate. The product decarboxylates to 4-methyl-2 oxopentanoate. The polypeptide is 3-isopropylmalate dehydrogenase (Neisseria meningitidis serogroup B (strain ATCC BAA-335 / MC58)).